The primary structure comprises 1785 residues: 1,3-beta-glucan synthase component FKS3 (1785 aa).

The next 8 membrane-spanning stretches (helical) occupy residues 337-357, 375-395, 415-435, 444-464, 508-528, 547-567, 572-592, and 712-732; these read FWIIHFAPFWFFTTFNSPTLY, LSVIAFGGTIACLVQILATVF, IGLLFCLAINLGPSVYVLGFF, AYIVSIVQLIIAFLTTFFFAV, LWVFVYLAKYIESYFFLTLSL, YLLGPILCKWQAKITLVLMLL, LFFLDTYLWYIICNCIFSIVL, and LATPISEPVPVDCMPTFTVLV. Composition is skewed to basic and acidic residues over residues 791-801 and 815-824; these read ESSHDEDRLEI and DHTESRKLPT. Residues 791-824 are disordered; sequence ESSHDEDRLEIPDALYDPRSSPLSDHTESRKLPT. N-linked (GlcNAc...) asparagine glycans are attached at residues N844, N874, N955, N1002, and N1170. The next 3 membrane-spanning stretches (helical) occupy residues 1215–1235, 1268–1288, and 1303–1323; these read LFISFSVQLFFVLLLNLGALN, VSIFVLSIFIVFFIAFAPLLI, and FLHHLLSMAPLFEVFVCQVYS. Residue N1360 is glycosylated (N-linked (GlcNAc...) asparagine). Transmembrane regions (helical) follow at residues 1370-1390, 1394-1414, 1475-1495, 1514-1534, and 1549-1569; these read FFMLLFAIISMWQPALLWFWI, SMCFAPFIFNPHQFAFMDFFI, FAELFLPFCVFLFNFTAFSFI, LLVTFLPIFLNSIVLFLLFWV, and AGAVIAFIAHTFSVLVYLLDF. Residue N1579 is glycosylated (N-linked (GlcNAc...) asparagine). Transmembrane regions (helical) follow at residues 1585–1605, 1655–1675, and 1713–1733; these read ILLITCINMHLILFKVFTTIF, FFLGHFLLFIQTPIILLPFID, and FSLYFVMLGVLLFMLIAPFFA. N-linked (GlcNAc...) asparagine glycosylation is present at N1761.

The protein belongs to the glycosyltransferase 48 family. N-glycosylated.

It localises to the mitochondrion. The protein localises to the membrane. It catalyses the reaction [(1-&gt;3)-beta-D-glucosyl](n) + UDP-alpha-D-glucose = [(1-&gt;3)-beta-D-glucosyl](n+1) + UDP + H(+). Functionally, required for spore wall assembly. This is 1,3-beta-glucan synthase component FKS3 (FKS3) from Saccharomyces cerevisiae (strain ATCC 204508 / S288c) (Baker's yeast).